We begin with the raw amino-acid sequence, 262 residues long: Dihydroorotate dehydrogenase B (NAD(+)), electron transfer subunit (262 aa).

An FAD-binding FR-type domain is found at 2-102 (SKVFDAKVLA…MGPLGRGFTL (101 aa)). FAD-binding positions include 53 to 56 (RPIS), 70 to 72 (LFR), and 77 to 78 (GT). Positions 224, 229, 232, and 248 each coordinate [2Fe-2S] cluster.

Belongs to the PyrK family. As to quaternary structure, heterotetramer of 2 PyrK and 2 PyrD type B subunits. However, the metal reductase complex seems to be composed of a heterooctamer of 4 PyrK and 4 PyrD subunits. FAD serves as cofactor. [2Fe-2S] cluster is required as a cofactor.

It is found in the cytoplasm. The protein operates within pyrimidine metabolism; UMP biosynthesis via de novo pathway; orotate from (S)-dihydroorotate (NAD(+) route): step 1/1. Functionally, responsible for channeling the electrons from the oxidation of dihydroorotate from the FMN redox center in the PyrD type B subunit to the ultimate electron acceptor NAD(+). Its function is as follows. Together with PyrD, also forms a metal reductase complex able to reduce Fe(III)-chelates to Fe(II)-chelates, as well as soluble Cr(VI) and U(VI), using NADH as electron donor. To a lesser extent, can also use NADPH as an electron donor. Is unable to reduce riboflavin and FMN with NADH as electron donor. May have an in vivo role in metal reduction in D.reducens, which is an organism capable of reducing contaminant heavy metals and radionuclides. The protein is Dihydroorotate dehydrogenase B (NAD(+)), electron transfer subunit of Desulforamulus reducens (strain ATCC BAA-1160 / DSM 100696 / MI-1) (Desulfotomaculum reducens).